The following is a 335-amino-acid chain: Mesoderm-specific transcript homolog protein (335 aa).

2 helical membrane passes run 13-33 (WWVQVGLLAVPLLAAYLHIPP) and 63-83 (VGVVGSPEIVVLLHGFPTSSY). In terms of domain architecture, AB hydrolase-1 spans 71 to 310 (IVVLLHGFPT…PRSTVSILDD (240 aa)). The RVIALD signature appears at 98 to 103 (RVIALD). Asn-163 is a glycosylation site (N-linked (GlcNAc...) asparagine). Residues 266–286 (VGALASVTIPIHFIYGPLDPV) form a helical membrane-spanning segment.

It belongs to the AB hydrolase superfamily. As to expression, highly expressed in hydatidiform moles, but barely expressed in dermoid cysts. Biallelic expression is detected in blood lymphocytes. Seems to imprinted in an isoform-specific manner rather than in a tissue-specific manner in lymphocytes. Isoform 1 is expressed only from the paternal allele. Isoform 2 is expressed from both the paternal allele and the maternal allele.

Its subcellular location is the endoplasmic reticulum membrane. This is Mesoderm-specific transcript homolog protein (MEST) from Homo sapiens (Human).